The primary structure comprises 89 residues: UPF0223 protein BcerKBAB4_3787 (89 aa).

This sequence belongs to the UPF0223 family.

The protein is UPF0223 protein BcerKBAB4_3787 of Bacillus mycoides (strain KBAB4) (Bacillus weihenstephanensis).